Consider the following 390-residue polypeptide: Flavohemoprotein (390 aa).

Ser2 carries the N-acetylserine modification. The 138-residue stretch at 12–149 folds into the Globin domain; it reads PLTPTEINFL…LAQTLIDAEA (138 aa). A heme b-binding site is contributed by His96. Active-site charge relay system residues include Tyr106 and Glu148. The segment at 157-390 is reductase; that stretch reads WEEFKDFRVT…EFFGPTDPDC (234 aa). Residues 158–263 enclose the FAD-binding FR-type domain; the sequence is EEFKDFRVTK…HAPVGTMKYD (106 aa). Residues Tyr196 and 214–217 contribute to the FAD site; that span reads REYS. NADP(+) is bound at residue 277–282; the sequence is GIGITP. 382 to 385 is an FAD binding site; that stretch reads FFGP.

Belongs to the globin family. Two-domain flavohemoproteins subfamily. It in the C-terminal section; belongs to the flavoprotein pyridine nucleotide cytochrome reductase family. FAD serves as cofactor. Heme b is required as a cofactor.

The protein resides in the cytoplasm. The catalysed reaction is 2 nitric oxide + NADPH + 2 O2 = 2 nitrate + NADP(+) + H(+). It catalyses the reaction 2 nitric oxide + NADH + 2 O2 = 2 nitrate + NAD(+) + H(+). Is involved in NO detoxification in an aerobic process, termed nitric oxide dioxygenase (NOD) reaction that utilizes O(2) and NAD(P)H to convert NO to nitrate, which protects the fungus from various noxious nitrogen compounds. Therefore, plays a central role in the inducible response to nitrosative stress. In terms of biological role, in the presence of oxygen and NADH, it has NADH oxidase activity, which leads to the generation of superoxide and H(2)O(2). Under anaerobic conditions, it also exhibits nitric oxide reductase and FAD reductase activities. However, all these reactions are much lower than NOD activity. The sequence is that of Flavohemoprotein from Candida norvegensis (Yeast).